The sequence spans 142 residues: Large ribosomal subunit protein uL13 (142 aa).

Belongs to the universal ribosomal protein uL13 family. Part of the 50S ribosomal subunit.

In terms of biological role, this protein is one of the early assembly proteins of the 50S ribosomal subunit, although it is not seen to bind rRNA by itself. It is important during the early stages of 50S assembly. This chain is Large ribosomal subunit protein uL13, found in Bordetella avium (strain 197N).